The following is a 392-amino-acid chain: Flavohemoprotein (392 aa).

Residues 1 to 139 (MLNAEQRAII…LADILIGAEE (139 aa)) enclose the Globin domain. His-85 provides a ligand contact to heme b. Active-site charge relay system residues include Tyr-95 and Glu-138. The tract at residues 150 to 392 (GGWRGTREFR…EFFGPAAALE (243 aa)) is reductase. Positions 153–256 (RGTREFRLVR…FPPAGDFTLA (104 aa)) constitute an FAD-binding FR-type domain. FAD is bound by residues Tyr-191 and 205–208 (RNYS). NADP(+) is bound at residue 268–273 (GVGITP). FAD is bound at residue 384–387 (FFGP).

The protein belongs to the globin family. Two-domain flavohemoproteins subfamily. In the C-terminal section; belongs to the flavoprotein pyridine nucleotide cytochrome reductase family. The cofactor is heme b. It depends on FAD as a cofactor.

It carries out the reaction 2 nitric oxide + NADPH + 2 O2 = 2 nitrate + NADP(+) + H(+). It catalyses the reaction 2 nitric oxide + NADH + 2 O2 = 2 nitrate + NAD(+) + H(+). Functionally, is involved in NO detoxification in an aerobic process, termed nitric oxide dioxygenase (NOD) reaction that utilizes O(2) and NAD(P)H to convert NO to nitrate, which protects the bacterium from various noxious nitrogen compounds. Therefore, plays a central role in the inducible response to nitrosative stress. The sequence is that of Flavohemoprotein from Pseudomonas putida (strain ATCC 47054 / DSM 6125 / CFBP 8728 / NCIMB 11950 / KT2440).